Reading from the N-terminus, the 89-residue chain is Small ribosomal subunit protein bS20 (89 aa).

It belongs to the bacterial ribosomal protein bS20 family.

Its function is as follows. Binds directly to 16S ribosomal RNA. The polypeptide is Small ribosomal subunit protein bS20 (Solidesulfovibrio magneticus (strain ATCC 700980 / DSM 13731 / RS-1) (Desulfovibrio magneticus)).